Here is a 128-residue protein sequence, read N- to C-terminus: Large ribosomal subunit protein eL22 (128 aa).

The protein belongs to the eukaryotic ribosomal protein eL22 family. As to quaternary structure, component of the large ribosomal subunit.

It is found in the cytoplasm. In terms of biological role, component of the large ribosomal subunit. The ribosome is a large ribonucleoprotein complex responsible for the synthesis of proteins in the cell. This chain is Large ribosomal subunit protein eL22 (RPL22), found in Gallus gallus (Chicken).